The primary structure comprises 780 residues: LPS-assembly protein LptD (780 aa).

Positions 1 to 24 (MKKRFPTLLATLIWTALYSQHTLA) are cleaved as a signal peptide.

This sequence belongs to the LptD family. Component of the lipopolysaccharide transport and assembly complex. Interacts with LptE and LptA.

The protein resides in the cell outer membrane. In terms of biological role, together with LptE, is involved in the assembly of lipopolysaccharide (LPS) at the surface of the outer membrane. This Yersinia pestis bv. Antiqua (strain Antiqua) protein is LPS-assembly protein LptD.